A 164-amino-acid polypeptide reads, in one-letter code: V-type proton ATPase subunit c3 (164 aa).

Over 1–11 (MSTFSGDETAP) the chain is Lumenal. Residues 12 to 32 (FFGFLGAAAALVFSCMGAAYG) traverse the membrane as a helical segment. Topologically, residues 33–54 (TAKSGVGVASMGVMRPELVMKS) are cytoplasmic. Residues 55–75 (IVPVVMAGVLGIYGLIIAVII) traverse the membrane as a helical segment. The Lumenal portion of the chain corresponds to 76 to 94 (STGINPKAKSYYLFDGYAH). A helical transmembrane segment spans residues 95–116 (LSSGLACGLAGLSAGMAIGIVG). At 117–128 (DAGVRANAQQPK) the chain is on the cytoplasmic side. The helical transmembrane segment at 129-154 (LFVGMILILIFAEALALYGLIVGIIL) threads the bilayer. Residues 155-164 (SSRAGQSRAE) lie on the Lumenal side of the membrane.

This sequence belongs to the V-ATPase proteolipid subunit family. V-ATPase is a heteromultimeric enzyme composed of a peripheral catalytic V1 complex (components A to H) attached to an integral membrane V0 proton pore complex (components: a, c, c'', d and e). The proteolipid components c and c'' are present as a hexameric ring that forms the proton-conducting pore. As to expression, expressed in leaf, root, flower and silique.

The protein resides in the vacuole membrane. Functionally, proton-conducting pore forming subunit of the membrane integral V0 complex of vacuolar ATPase. V-ATPase is responsible for acidifying a variety of intracellular compartments in eukaryotic cells. This Arabidopsis thaliana (Mouse-ear cress) protein is V-type proton ATPase subunit c3 (VHA-c3).